The primary structure comprises 671 residues: DNA ligase (671 aa).

NAD(+) is bound by residues 38–42 (DKEFD), 87–88 (SL), and Glu-113. Catalysis depends on Lys-115, which acts as the N6-AMP-lysine intermediate. NAD(+) contacts are provided by Arg-136, Glu-170, Lys-282, and Lys-306. Zn(2+) contacts are provided by Cys-396, Cys-399, Cys-414, and Cys-419. In terms of domain architecture, BRCT spans 586 to 671 (SDLQPFVGQS…LLKQEGIAID (86 aa)).

The protein belongs to the NAD-dependent DNA ligase family. LigA subfamily. Mg(2+) is required as a cofactor. The cofactor is Mn(2+).

The enzyme catalyses NAD(+) + (deoxyribonucleotide)n-3'-hydroxyl + 5'-phospho-(deoxyribonucleotide)m = (deoxyribonucleotide)n+m + AMP + beta-nicotinamide D-nucleotide.. In terms of biological role, DNA ligase that catalyzes the formation of phosphodiester linkages between 5'-phosphoryl and 3'-hydroxyl groups in double-stranded DNA using NAD as a coenzyme and as the energy source for the reaction. It is essential for DNA replication and repair of damaged DNA. The sequence is that of DNA ligase from Leptospira biflexa serovar Patoc (strain Patoc 1 / Ames).